A 318-amino-acid polypeptide reads, in one-letter code: Probable pyridoxal 5'-phosphate synthase subunit PDX1.1 (318 aa).

Asp-49 lines the D-ribose 5-phosphate pocket. The active-site Schiff-base intermediate with D-ribose 5-phosphate is the Lys-106. Gly-178 serves as a coordination point for D-ribose 5-phosphate. Residue Arg-190 coordinates D-glyceraldehyde 3-phosphate. D-ribose 5-phosphate-binding positions include Gly-239 and 260 to 261 (GS).

It belongs to the PdxS/SNZ family.

It catalyses the reaction aldehydo-D-ribose 5-phosphate + D-glyceraldehyde 3-phosphate + L-glutamine = pyridoxal 5'-phosphate + L-glutamate + phosphate + 3 H2O + H(+). It participates in cofactor biosynthesis; pyridoxal 5'-phosphate biosynthesis. Functionally, catalyzes the formation of pyridoxal 5'-phosphate from ribose 5-phosphate (RBP), glyceraldehyde 3-phosphate (G3P) and ammonia. The ammonia is provided by PDX2. Can also use ribulose 5-phosphate and dihydroxyacetone phosphate as substrates, resulting from enzyme-catalyzed isomerization of RBP and G3P, respectively. Also plays an indirect role in resistance to singlet oxygen-generating photosensitizers. In Oryza sativa subsp. japonica (Rice), this protein is Probable pyridoxal 5'-phosphate synthase subunit PDX1.1 (PDX11).